Reading from the N-terminus, the 628-residue chain is RING finger protein 112 (628 aa).

Residues 57–98 form an RING-type zinc finger; sequence CSICLERPREPISLDCGHDFCPRCFSTHRVPGCGPPCCPECR. Residues 132–628 form an interaction with ZBTB16 region; the sequence is AVRAEPLLLV…GDREPLLQEE (497 aa). Positions 167–409 constitute a GB1/RHD3-type G domain; sequence DTPVCLLAVL…RCPGYWSEGR (243 aa). GTP is bound at residue 318–319; sequence RD. The next 2 helical transmembrane spans lie at 544 to 564 and 577 to 597; these read LAAV…GVVG and GMVA…GGGV.

The protein belongs to the TRAFAC class dynamin-like GTPase superfamily. GB1/RHD3 GTPase family. GB1 subfamily. As to quaternary structure, self-associates. Interacts with SP1 in an oxidative stress-regulated manner. Interacts with SIGMAR1 in an oxidative stress-regulated manner. Interacts with ZBTB16 (via C2H2-type zinc finger domains 1 and 2). In terms of processing, auto-ubiquitinated.

It localises to the membrane. The protein localises to the cytoplasm. It is found in the nucleus. The protein resides in the nuclear body. Its subcellular location is the nucleoplasm. It localises to the endosome. The protein localises to the cytoplasmic vesicle. It is found in the secretory vesicle. The protein resides in the synaptic vesicle. Its subcellular location is the postsynaptic density. It localises to the perikaryon. The protein localises to the cell projection. It is found in the neuron projection. It catalyses the reaction S-ubiquitinyl-[E2 ubiquitin-conjugating enzyme]-L-cysteine + [acceptor protein]-L-lysine = [E2 ubiquitin-conjugating enzyme]-L-cysteine + N(6)-ubiquitinyl-[acceptor protein]-L-lysine.. It functions in the pathway protein modification; protein ubiquitination. Its function is as follows. E3 ubiquitin-protein ligase that plays an important role in neuronal differentiation, including neurogenesis and gliogenesis, during brain development. During embryonic development initiates neuronal differentiation by inducing cell cycle arrest at the G0/G1 phase through up-regulation of cell-cycle regulatory proteins. Plays a role not only in the fetal period during the development of the nervous system, but also in the adult brain, where it is involved in the maintenance of neural functions and protection of the nervous tissue cells from oxidative stress-induced damage. Exhibits GTPase and E3 ubiquitin-protein ligase activities. Regulates dendritic spine density and synaptic neurotransmission; its ability to hydrolyze GTP is involved in the maintenance of dendritic spine density. The chain is RING finger protein 112 (RNF112) from Bos taurus (Bovine).